Consider the following 106-residue polypeptide: MADFLGMMKQAAQLQSKMQEMQAELGNVEVEGISGGGLVAVRMTAKMDVKSIKIDPSLLKPEEAEILEDLLVTAHGDARRKAEAAMQEKMQAITGKLGLPPGFGFG.

Belongs to the YbaB/EbfC family. In terms of assembly, homodimer.

The protein resides in the cytoplasm. It is found in the nucleoid. Its function is as follows. Binds to DNA and alters its conformation. May be involved in regulation of gene expression, nucleoid organization and DNA protection. The protein is Nucleoid-associated protein BRADO0764 of Bradyrhizobium sp. (strain ORS 278).